The chain runs to 510 residues: MGAIIVLVVLFATIAGYFKWIHTYWRRRGISGPEGLPFIGNYYDLADVNKPRGYLIHKWTQKFGKVFGYYEGAVPVLVVSDMDMLQELFLKKFDNFYARKSTNHIHGNLECSKSEPRINLFTSRGARWKRLRALASPGFSVKALKQVHDVMEDSAINMVDLMAKHEDGKPFNIHAYFQEFTYDVISRLAMGQPNSELFNNSGVEIVKSIFMRTHRVLPWYFTVLFPQFEHLVKRMFYNHAAVQGGDIEKLLLICKKTVESRIQEREENAKLGFENAENDFIDMFLNYYSEQVEDIEFGSTVEKKVTAEDVIGACFVFLLAGFDTTANSLAYASYLLAKHPEKMKLAQEEVDTVVGSENVSYDDMTKLKYLDAVVRESLRLYPVAWFACSRECVKPTTLGDIYIDKGVKIEADVMSLHRSKEIWGENADDFVPERWLEPSSRHTMSWIPFGAGPRQCVGMRLGLSEAKTALAHLLRRYDLVAGVETEKELNILGCTTTSPEAVTLYLKPRI.

Cys456 is a heme binding site.

It belongs to the cytochrome P450 family. It depends on heme as a cofactor.

Its function is as follows. Cytochromes P450 are a group of heme-thiolate monooxygenases. They oxidize a variety of structurally unrelated compounds, including steroids, fatty acids, and xenobiotics. May play a role in the regulation of lifespan. This Caenorhabditis elegans protein is Putative cytochrome P450 cyp-13B1.